The following is a 496-amino-acid chain: Squalene epoxidase ERG1 (496 aa).

The Cytoplasmic segment spans residues 1–16; the sequence is MSAVNVAPELINADNT. The helical transmembrane segment at 17-37 threads the bilayer; sequence ITYDAIVIGAGVIGPCVATGL. FAD is bound by residues 28–29, 48–49, arginine 56, and arginine 158; these read VI and ER. Residues 38-474 are Lumenal-facing; sequence ARKGKKVLIV…FLGLPMALLE (437 aa). Glycyl lysine isopeptide (Lys-Gly) (interchain with G-Cter in ubiquitin) cross-links involve residues lysine 284, lysine 289, and lysine 311. The FAD site is built by aspartate 335 and methionine 348. Residues 475 to 495 traverse the membrane as a helical segment; the sequence is GIMILITAIRVFTPFLFGELI. A topological domain (cytoplasmic) is located at residue glycine 496.

The protein belongs to the squalene monooxygenase family. Interacts with ERG28. FAD is required as a cofactor.

The protein resides in the microsome membrane. It is found in the endoplasmic reticulum membrane. The protein localises to the lipid droplet. The enzyme catalyses squalene + reduced [NADPH--hemoprotein reductase] + O2 = (S)-2,3-epoxysqualene + oxidized [NADPH--hemoprotein reductase] + H2O + H(+). Its pathway is terpene metabolism; lanosterol biosynthesis; lanosterol from farnesyl diphosphate: step 2/3. With respect to regulation, inhibited by the allylamine antimycotic drugs. Functionally, squalene epoxidase; part of the third module of ergosterol biosynthesis pathway that includes the late steps of the pathway. ERG1 catalyzes the epoxidation of squalene into 2,3-epoxysqualene. The third module or late pathway involves the ergosterol synthesis itself through consecutive reactions that mainly occur in the endoplasmic reticulum (ER) membrane. Firstly, the squalene synthase ERG9 catalyzes the condensation of 2 farnesyl pyrophosphate moieties to form squalene, which is the precursor of all steroids. Squalene synthase is crucial for balancing the incorporation of farnesyl diphosphate (FPP) into sterol and nonsterol isoprene synthesis. Secondly, the squalene epoxidase ERG1 catalyzes the stereospecific oxidation of squalene to (S)-2,3-epoxysqualene, which is considered to be a rate-limiting enzyme in steroid biosynthesis. Then, the lanosterol synthase ERG7 catalyzes the cyclization of (S)-2,3 oxidosqualene to lanosterol, a reaction that forms the sterol core. In the next steps, lanosterol is transformed to zymosterol through a complex process involving various demethylation, reduction and desaturation reactions. The lanosterol 14-alpha-demethylase ERG11 (also known as CYP51) catalyzes C14-demethylation of lanosterol to produce 4,4'-dimethyl cholesta-8,14,24-triene-3-beta-ol, which is critical for ergosterol biosynthesis. The C-14 reductase ERG24 reduces the C14=C15 double bond of 4,4-dimethyl-cholesta-8,14,24-trienol to produce 4,4-dimethyl-cholesta-8,24-dienol. 4,4-dimethyl-cholesta-8,24-dienol is substrate of the C-4 demethylation complex ERG25-ERG26-ERG27 in which ERG25 catalyzes the three-step monooxygenation required for the demethylation of 4,4-dimethyl and 4alpha-methylsterols, ERG26 catalyzes the oxidative decarboxylation that results in a reduction of the 3-beta-hydroxy group at the C-3 carbon to an oxo group, and ERG27 is responsible for the reduction of the keto group on the C-3. ERG28 has a role as a scaffold to help anchor ERG25, ERG26 and ERG27 to the endoplasmic reticulum and ERG29 regulates the activity of the iron-containing C4-methylsterol oxidase ERG25. Then, the sterol 24-C-methyltransferase ERG6 catalyzes the methyl transfer from S-adenosyl-methionine to the C-24 of zymosterol to form fecosterol. The C-8 sterol isomerase ERG2 catalyzes the reaction which results in unsaturation at C-7 in the B ring of sterols and thus converts fecosterol to episterol. The sterol-C5-desaturase ERG3 then catalyzes the introduction of a C-5 double bond in the B ring to produce 5-dehydroepisterol. The C-22 sterol desaturase ERG5 further converts 5-dehydroepisterol into ergosta-5,7,22,24(28)-tetraen-3beta-ol by forming the C-22(23) double bond in the sterol side chain. Finally, ergosta-5,7,22,24(28)-tetraen-3beta-ol is substrate of the C-24(28) sterol reductase ERG4 to produce ergosterol. The protein is Squalene epoxidase ERG1 of Saccharomyces cerevisiae (strain ATCC 204508 / S288c) (Baker's yeast).